The primary structure comprises 355 residues: Tryptophan--tRNA ligase (355 aa).

Residues 13–15 (QPT) and 21–22 (GN) each bind ATP. A 'HIGH' region motif is present at residues 14–22 (PTGNLHLGN). Residue aspartate 137 participates in L-tryptophan binding. ATP-binding positions include 149 to 151 (GED), isoleucine 208, and 217 to 221 (KMSKS). A 'KMSKS' region motif is present at residues 217–221 (KMSKS).

It belongs to the class-I aminoacyl-tRNA synthetase family. As to quaternary structure, homodimer.

It is found in the cytoplasm. It catalyses the reaction tRNA(Trp) + L-tryptophan + ATP = L-tryptophyl-tRNA(Trp) + AMP + diphosphate + H(+). Its function is as follows. Catalyzes the attachment of tryptophan to tRNA(Trp). This is Tryptophan--tRNA ligase from Mesorhizobium japonicum (strain LMG 29417 / CECT 9101 / MAFF 303099) (Mesorhizobium loti (strain MAFF 303099)).